The following is a 589-amino-acid chain: Probable translation initiation factor IF-2 (589 aa).

The 216-residue stretch at L14–E229 folds into the tr-type G domain. The interval G23–T30 is G1. G23 to T30 is a binding site for GTP. The segment at G48–R52 is G2. The interval D84–G87 is G3. GTP contacts are provided by residues D84–H88 and N138–D141. Residues N138 to D141 form a G4 region. The tract at residues S206–K208 is G5.

The protein belongs to the TRAFAC class translation factor GTPase superfamily. Classic translation factor GTPase family. IF-2 subfamily.

Function in general translation initiation by promoting the binding of the formylmethionine-tRNA to ribosomes. Seems to function along with eIF-2. The protein is Probable translation initiation factor IF-2 (infB) of Thermoplasma acidophilum (strain ATCC 25905 / DSM 1728 / JCM 9062 / NBRC 15155 / AMRC-C165).